The chain runs to 100 residues: Urease subunit gamma (100 aa).

The protein belongs to the urease gamma subunit family. Heterotrimer of UreA (gamma), UreB (beta) and UreC (alpha) subunits. Three heterotrimers associate to form the active enzyme.

It is found in the cytoplasm. It carries out the reaction urea + 2 H2O + H(+) = hydrogencarbonate + 2 NH4(+). It functions in the pathway nitrogen metabolism; urea degradation; CO(2) and NH(3) from urea (urease route): step 1/1. This chain is Urease subunit gamma, found in Pseudomonas entomophila (strain L48).